Here is a 388-residue protein sequence, read N- to C-terminus: S-adenosylmethionine synthase (388 aa).

Residue His17 coordinates ATP. Residue Asp19 participates in Mg(2+) binding. Residue Glu45 coordinates K(+). Glu58 and Gln106 together coordinate L-methionine. A flexible loop region spans residues 106-116; that stretch reads QSAHIAQGVDK. ATP is bound by residues 166 to 168, Asp241, 247 to 248, Ala264, and Lys268; these read DAK and RK. Asp241 is a binding site for L-methionine. Lys272 contacts L-methionine.

It belongs to the AdoMet synthase family. As to quaternary structure, homotetramer; dimer of dimers. Requires Mg(2+) as cofactor. K(+) is required as a cofactor.

It is found in the cytoplasm. The catalysed reaction is L-methionine + ATP + H2O = S-adenosyl-L-methionine + phosphate + diphosphate. It participates in amino-acid biosynthesis; S-adenosyl-L-methionine biosynthesis; S-adenosyl-L-methionine from L-methionine: step 1/1. Catalyzes the formation of S-adenosylmethionine (AdoMet) from methionine and ATP. The overall synthetic reaction is composed of two sequential steps, AdoMet formation and the subsequent tripolyphosphate hydrolysis which occurs prior to release of AdoMet from the enzyme. The polypeptide is S-adenosylmethionine synthase (Cereibacter sphaeroides (strain ATCC 17023 / DSM 158 / JCM 6121 / CCUG 31486 / LMG 2827 / NBRC 12203 / NCIMB 8253 / ATH 2.4.1.) (Rhodobacter sphaeroides)).